Reading from the N-terminus, the 262-residue chain is Small ribosomal subunit protein eS1 (262 aa).

It belongs to the eukaryotic ribosomal protein eS1 family. In terms of assembly, component of the small ribosomal subunit. Mature ribosomes consist of a small (40S) and a large (60S) subunit. The 40S subunit contains about 32 different proteins and 1 molecule of RNA (18S). The 60S subunit contains about 42 different proteins and 3 molecules of RNA (28S, 5.8S and 5S).

The protein resides in the cytoplasm. Its function is as follows. Component of the ribosome, a large ribonucleoprotein complex responsible for the synthesis of proteins in the cell. The small ribosomal subunit (SSU) binds messenger RNAs (mRNAs) and translates the encoded message by selecting cognate aminoacyl-transfer RNA (tRNA) molecules. The large subunit (LSU) contains the ribosomal catalytic site termed the peptidyl transferase center (PTC), which catalyzes the formation of peptide bonds, thereby polymerizing the amino acids delivered by tRNAs into a polypeptide chain. The nascent polypeptides leave the ribosome through a tunnel in the LSU and interact with protein factors that function in enzymatic processing, targeting, and the membrane insertion of nascent chains at the exit of the ribosomal tunnel. This is Small ribosomal subunit protein eS1 from Plasmodium falciparum (isolate 3D7).